Consider the following 584-residue polypeptide: WD repeat-containing protein JIP5 (584 aa).

WD repeat units lie at residues arginine 128–aspartate 173, serine 180–lysine 219, aspartate 269–glutamine 314, and aspartate 378–glutamate 415. Disordered regions lie at residues tyrosine 409 to isoleucine 497 and lysine 516 to valine 563. Acidic residues-rich tracts occupy residues aspartate 412–serine 429 and phenylalanine 450–glutamate 460. 2 stretches are compositionally biased toward basic and acidic residues: residues threonine 483–lysine 493 and serine 528–glutamine 552.

This sequence belongs to the WD repeat WDR55 family.

The protein resides in the nucleus. It is found in the nucleolus. The chain is WD repeat-containing protein JIP5 (JIP5) from Lodderomyces elongisporus (strain ATCC 11503 / CBS 2605 / JCM 1781 / NBRC 1676 / NRRL YB-4239) (Yeast).